Here is a 467-residue protein sequence, read N- to C-terminus: MSLSLWQQCLARLQDELPATEFSMWIRPLQAELSDNTLALYAPNRFVLDWVRDKYLNNINGLLNDFCGADAPQLRFEVGAKPASSLQKGAVSPAAAAIPAAQVQTARVAPTIVRPGWDNVPAPAEPTYRSNVNVKHTFDNFVEGKSNQLARAAARQVADNPGGAYNPLFLYGGTGLGKTHLLHAVGNGIVARKPNAKVVYMHSERFVQDMVKALQNNAIEEFKRYYRSVDALLIDDIQFFANKERSQEEFFHTFNALLEGNQQIILTSDRYPKEINGVEDRLKSRFGWGLTVAIEPPELETRVAILMKKADENDIRLPGEVAFFIAKRLRSNVRELEGALNRVIANANFTGRAITIDFVREALRDLLALQEKLVTIDNIQKTVAEYYKIKVADLLSKRRSRSVARPRQMAMALAKELTNHSLPEIGDAFGGRDHTTVLHACRKIEQLREESHDIKEDFSNLIRTLSS.

Positions 1 to 85 (MSLSLWQQCL…FEVGAKPASS (85 aa)) are domain I, interacts with DnaA modulators. The interval 85–130 (SLQKGAVSPAAAAIPAAQVQTARVAPTIVRPGWDNVPAPAEPTYRS) is domain II. Positions 131-347 (NVNVKHTFDN…GALNRVIANA (217 aa)) are domain III, AAA+ region. The ATP site is built by Gly175, Gly177, Lys178, and Thr179. The interval 348-467 (NFTGRAITID…FSNLIRTLSS (120 aa)) is domain IV, binds dsDNA.

The protein belongs to the DnaA family. In terms of assembly, oligomerizes as a right-handed, spiral filament on DNA at oriC.

It localises to the cytoplasm. In terms of biological role, plays an essential role in the initiation and regulation of chromosomal replication. ATP-DnaA binds to the origin of replication (oriC) to initiate formation of the DNA replication initiation complex once per cell cycle. Binds the DnaA box (a 9 base pair repeat at the origin) and separates the double-stranded (ds)DNA. Forms a right-handed helical filament on oriC DNA; dsDNA binds to the exterior of the filament while single-stranded (ss)DNA is stabiized in the filament's interior. The ATP-DnaA-oriC complex binds and stabilizes one strand of the AT-rich DNA unwinding element (DUE), permitting loading of DNA polymerase. After initiation quickly degrades to an ADP-DnaA complex that is not apt for DNA replication. Binds acidic phospholipids. This Klebsiella pneumoniae (strain 342) protein is Chromosomal replication initiator protein DnaA.